A 297-amino-acid chain; its full sequence is tRNA uridine(34) hydroxylase (297 aa).

The 96-residue stretch at 133-228 folds into the Rhodanese domain; it reads SGDEVVFFDG…YGETFKDQGL (96 aa). The active-site Cysteine persulfide intermediate is Cys188.

It belongs to the TrhO family.

The enzyme catalyses uridine(34) in tRNA + AH2 + O2 = 5-hydroxyuridine(34) in tRNA + A + H2O. Functionally, catalyzes oxygen-dependent 5-hydroxyuridine (ho5U) modification at position 34 in tRNAs. This is tRNA uridine(34) hydroxylase from Pseudarthrobacter chlorophenolicus (strain ATCC 700700 / DSM 12829 / CIP 107037 / JCM 12360 / KCTC 9906 / NCIMB 13794 / A6) (Arthrobacter chlorophenolicus).